The primary structure comprises 890 residues: Nucleoside hydrolase 3 (890 aa).

The N-terminal stretch at 1 to 21 is a signal peptide; it reads MLTSPTLKSLWFLFTILGLLG. N-linked (GlcNAc...) asparagine glycans are attached at residues asparagine 55, asparagine 232, asparagine 371, asparagine 485, asparagine 580, asparagine 655, and asparagine 740.

The protein belongs to the IUNH family.

Its subcellular location is the secreted. It is found in the extracellular space. It localises to the apoplast. The enzyme catalyses a purine D-ribonucleoside + H2O = a purine nucleobase + D-ribose. The catalysed reaction is inosine + H2O = hypoxanthine + D-ribose. It carries out the reaction adenosine + H2O = D-ribose + adenine. In terms of biological role, extracellular purine-specific hydrolase present in the apoplastic fluid involved in the degradation of extracellular nucleosides, including inosine and adenosine, and which may participate in wound and pathogen responses (e.g. Botrytis cinerea). The chain is Nucleoside hydrolase 3 from Arabidopsis thaliana (Mouse-ear cress).